The following is a 408-amino-acid chain: MRLDQVRAALDRRLDPASRAPLAVGFSGGGDSLFLLKTVLDWARPLDRPVLALVVDHQLQPQSTAWTAEAVAKARALGAAALGLTWTDQKPRTGLPAAARRARHALLATAAREAGARVLILGHTASDLAEGVAMRAEGSSVSNPRAWAPSPVWPEGRGLFVLRPLLTLTRAEIRDALTREGETWLDDPANLDLRYARARARAAGALTPLLPVRESPPPGVFEIDPAGAIRLPRDVVPAHLAAALLCASGAERPPRGDRLARLVERLRSGARFTATLAGARIEADQAVLICRDAGEAARGGLARLDLAPGACGVWDGRWEVVAGKTALAVVALRGRTSSLPAEQRARLSAIAPAVRPSLPVLLSLDGDAPGELVLDDLQLEADGEARVRSLVPDRFKAAVGLLDQESVT.

27–32 contacts ATP; that stretch reads SGGGDS.

This sequence belongs to the tRNA(Ile)-lysidine synthase family.

It localises to the cytoplasm. It catalyses the reaction cytidine(34) in tRNA(Ile2) + L-lysine + ATP = lysidine(34) in tRNA(Ile2) + AMP + diphosphate + H(+). Its function is as follows. Ligates lysine onto the cytidine present at position 34 of the AUA codon-specific tRNA(Ile) that contains the anticodon CAU, in an ATP-dependent manner. Cytidine is converted to lysidine, thus changing the amino acid specificity of the tRNA from methionine to isoleucine. The chain is tRNA(Ile)-lysidine synthase from Caulobacter vibrioides (strain ATCC 19089 / CIP 103742 / CB 15) (Caulobacter crescentus).